Reading from the N-terminus, the 1531-residue chain is Probable outer membrane protein PmpD (1531 aa).

Residues M1–A20 form the signal peptide. An Autotransporter domain is found at E1244–F1531.

Belongs to the PMP outer membrane protein family.

It is found in the secreted. The protein resides in the cell wall. Its subcellular location is the cell outer membrane. In Chlamydia trachomatis serovar D (strain ATCC VR-885 / DSM 19411 / UW-3/Cx), this protein is Probable outer membrane protein PmpD (pmpD).